The chain runs to 734 residues: ATP-dependent RNA helicase SUV3L, mitochondrial (734 aa).

The transit peptide at 1–60 (MAAAAAIAAALLRRSTSSQHHRRILLLPLLSHLQRAAPRSPSPWDPPPHHRFFFSSDVTA) directs the protein to the mitochondrion. The disordered stretch occupies residues 58–88 (VTAEGDSKPRPPLDGKQLWREVSTSEPATGA). Residues 62 to 76 (GDSKPRPPLDGKQLW) are compositionally biased toward basic and acidic residues. A Helicase ATP-binding domain is found at 198–356 (FARAMRRRVV…RFKPLVVEAK (159 aa)). Residue 211-218 (GPTNSGKT) coordinates ATP. Positions 357-525 (TLLGDLKNVR…SFAIQFPDLT (169 aa)) constitute a Helicase C-terminal domain. 2 N-linked (GlcNAc...) asparagine glycosylation sites follow: N594 and N614. Positions 667 to 734 (ASWKPTSRQQ…QDPSSLNFVA (68 aa)) are disordered. Acidic residues predominate over residues 684 to 693 (EEDNDVEQAS). Residues 695–709 (DNAKNDSEDGYERSI) are compositionally biased toward basic and acidic residues. A glycan (N-linked (GlcNAc...) asparagine) is linked at N699. A compositionally biased stretch (polar residues) spans 725–734 (QDPSSLNFVA).

It belongs to the helicase family. Homodimer; in free form. Component of the mitochondrial degradosome (mtEXO) complex which is a heteropentamer containing 2 copies of SUPV3L1 and 3 copies of PNPT1. The cofactor is Mg(2+). Mn(2+) is required as a cofactor.

It localises to the nucleus. It is found in the mitochondrion matrix. The protein localises to the mitochondrion nucleoid. The enzyme catalyses ATP + H2O = ADP + phosphate + H(+). Functionally, major helicase player in mitochondrial RNA metabolism. Component of the mitochondrial degradosome (mtEXO) complex, that degrades 3' overhang double-stranded RNA with a 3'-to-5' directionality in an ATP-dependent manner. ATPase and ATP-dependent multisubstrate helicase, able to unwind double-stranded (ds) DNA and RNA, and RNA/DNA heteroduplexes in the 5'-to-3' direction. Plays a role in the RNA surveillance system in mitochondria; regulates the stability of mature mRNAs, the removal of aberrantly formed mRNAs and the rapid degradation of non coding processing intermediates. Confers salinity and drought stress tolerances by maintaining both photosynthesis and antioxidant machinery, probably via an increase in plant hormones levels such as gibberellic acid (GA(3)), the cytokinin zeatin (Z) and indole-3-acetic acid (IAA). In Oryza sativa subsp. japonica (Rice), this protein is ATP-dependent RNA helicase SUV3L, mitochondrial.